A 250-amino-acid polypeptide reads, in one-letter code: MSAIEVKNLVKKFHGQTVLHGIDLEVKPGEVVAIIGPSGSGKTTLLRSINLLEQPEAGTITVGDITIDTARSLSQQKSLIRQLRQHVGFVFQNFNLFPHRTVLENIIEGPVIVKGEPKEEATARARELLAKVGLAGKETSYPRRLSGGQQQRVAIARALAMRPEVILFDEPTSALDPELVGEVLNTIRQLAQEKRTMVIVTHEMSFARDVADRAIFMDQGRIVEQGAAKALFADPEQPRTRQFLEKFLLQ.

The ABC transporter domain maps to 4-244 (IEVKNLVKKF…PEQPRTRQFL (241 aa)). 36 to 43 (GPSGSGKT) serves as a coordination point for ATP.

The protein belongs to the ABC transporter superfamily. As to quaternary structure, the complex is composed of two ATP-binding proteins (TcyN), two transmembrane proteins (TcyL) and a solute-binding protein (TcyJ).

The protein localises to the cell inner membrane. It carries out the reaction L-cystine(out) + ATP + H2O = L-cystine(in) + ADP + phosphate + H(+). The enzyme catalyses D-cystine(out) + ATP + H2O = D-cystine(in) + ADP + phosphate + H(+). With respect to regulation, the TcyJLN system is inhibited by L-cystine, L-cysteine, DL-2,6-diaminopimelic acid and L-cystathionine, and is stimulated by D-cysteine. Functionally, part of the ABC transporter complex TcyJLN involved in L-cystine import. This high affinity cystine transporter is involved in resistance to oxidative stress by forming a L-cysteine/L-cystine shuttle system with the EamA transporter, which exports L-cysteine as reducing equivalents to the periplasm to prevent the cells from oxidative stress. Exported L-cysteine can reduce the periplasmic hydrogen peroxide to water, and then generated L-cystine is imported back into the cytoplasm via the TcyJLN complex. Functions at low cystine concentrations. The system can also transport L-cysteine, diaminopimelic acid (DAP), djenkolate, lanthionine, D-cystine, homocystine, and it mediates accumulation of the toxic compounds L-selenaproline (SCA) and L-selenocystine (SeCys). Could also facilitate threonine efflux. Responsible for energy coupling to the transport system. The protein is L-cystine transport system ATP-binding protein TcyN of Escherichia coli (strain K12).